The sequence spans 309 residues: Taste receptor type 2 member 31 (309 aa).

The Extracellular segment spans residues 1-2; the sequence is MI. Residues 3–23 traverse the membrane as a helical segment; sequence TFLPIIFSILVVVTFVIGNFA. The Cytoplasmic portion of the chain corresponds to 24-55; it reads NGFIALVNSTEWVKRQKISFADQILTALAVSR. A helical transmembrane segment spans residues 56–76; the sequence is VGLLWVLLLNWYATVLNPAFY. The Extracellular portion of the chain corresponds to 77-100; the sequence is SVEVRTTTYNVWAVTNHFSNWLAT. Residues 101 to 121 traverse the membrane as a helical segment; the sequence is SLSIFYLLKIANFSNLIFLHL. At 122–126 the chain is on the cytoplasmic side; sequence KRRVK. Residues 127 to 147 form a helical membrane-spanning segment; the sequence is NVILVMLLGPLLILACHLFMV. The Extracellular segment spans residues 148 to 181; that stretch reads NMNEIVRTKEYEENMTWKYILRNAIYHPGMTVTT. Residue N161 is glycosylated (N-linked (GlcNAc...) asparagine). Residues 182-202 form a helical membrane-spanning segment; sequence LQNLVPFTLTLISFLLLICSL. Residues 203–229 are Cytoplasmic-facing; sequence CKHLKKMQLHGKGPQDPSTKVHIKALQ. A helical membrane pass occupies residues 230–250; the sequence is IVISFLLLCVIYFVSVIISIW. Residues 251–259 lie on the Extracellular side of the membrane; the sequence is SFESLGNKP. A helical transmembrane segment spans residues 260–280; the sequence is VFMFCQAIRFSYPSAHPFIVI. Residues 281–309 lie on the Cytoplasmic side of the membrane; it reads WGNKKLKQTFLSVLWNVRYWVKGQKPSSL.

It belongs to the G-protein coupled receptor T2R family.

It localises to the membrane. Receptor that may play a role in the perception of bitterness and is gustducin-linked. May play a role in sensing the chemical composition of the gastrointestinal content. The activity of this receptor may stimulate alpha gustducin, mediate PLC-beta-2 activation and lead to the gating of TRPM5. This is Taste receptor type 2 member 31 (TAS2R31) from Papio hamadryas (Hamadryas baboon).